Consider the following 419-residue polypeptide: Methyltransferase/ribosomally synthesized type I borosin cyclic peptide precursor gjuMa (419 aa).

The tract at residues 1–255 (MATPIATTTN…AISTLYVPPR (255 aa)) is methyltransferase domain. Catalysis depends on residues arginine 79, tyrosine 83, and tyrosine 105. S-adenosyl-L-methionine-binding residues include tyrosine 105, histidine 107, valine 110, alanine 137, glutamine 179, glycine 217, serine 248, and threonine 249. Positions 256–381 (DISPVDPTMA…GAVYALMSRP (126 aa)) are clasp domain. The segment at 382–404 (TGDIAREKELTNDEIANNHGAPY) is precursor leader. Serine 408 carries the post-translational modification N-methylserine. Alanine 409 carries the N-methylalanine modification. Valine 410 bears the N-methylvaline mark. 2 positions are modified to N-methylisoleucine: isoleucine 411 and isoleucine 412. An N-methylalanine mark is found at alanine 413 and alanine 414. N-methylisoleucine is present on residues isoleucine 415 and isoleucine 416.

This sequence in the N-terminal section; belongs to the precorrin methyltransferase family. Homodimer. Post-translationally, gjuMA automethylates at Ser-408, Ala-409, Val-410, Ile-411, Ile-412, Ala-413, Ala-414, Ile-415 and Ile-416 before being processed by ae prolyloligopeptidase which likely forms a peptidyl ester upon removal of the follower propeptide, which then undergoes macrocyclization with the N-terminus of the modified core peptide. Peptide backbone alpha-N-methylations change the physicochemical properties of amide bonds to provide structural constraints and other favorable characteristics including biological membrane permeability to peptides.

Its pathway is secondary metabolite biosynthesis. In terms of biological role, fusion protein of the methyltransferase gjuM and the type I borosin core peptide; part of the gene cluster that mediates the biosynthesis of a type I borosin, a highly methylated cyclic peptide with potent biological activities. Type I borosins derive from the C-terminus of the fusion protein, and it is the same protein that methylates its own C-terminus using S-adenosyl methionine (SAM). The C-terminus is subsequently cleaved off and macrocyclized by a prolyloligopeptidase to give the final product. The polypeptide is Methyltransferase/ribosomally synthesized type I borosin cyclic peptide precursor gjuMa (Gymnopilus junonius (Spectacular rustgill mushroom)).